The sequence spans 341 residues: DNA-directed RNA polymerase subunit alpha (341 aa).

An alpha N-terminal domain (alpha-NTD) region spans residues 1 to 226 (MLIAQRPTIT…ELFGLVRELN (226 aa)). The alpha C-terminal domain (alpha-CTD) stretch occupies residues 241 to 341 (AALAADLALP…DQRYIETEQL (101 aa)).

This sequence belongs to the RNA polymerase alpha chain family. As to quaternary structure, homodimer. The RNAP catalytic core consists of 2 alpha, 1 beta, 1 beta' and 1 omega subunit. When a sigma factor is associated with the core the holoenzyme is formed, which can initiate transcription.

The enzyme catalyses RNA(n) + a ribonucleoside 5'-triphosphate = RNA(n+1) + diphosphate. Functionally, DNA-dependent RNA polymerase catalyzes the transcription of DNA into RNA using the four ribonucleoside triphosphates as substrates. This Acidothermus cellulolyticus (strain ATCC 43068 / DSM 8971 / 11B) protein is DNA-directed RNA polymerase subunit alpha.